Reading from the N-terminus, the 357-residue chain is Protein RecA (357 aa).

67 to 74 (GPESSGKT) lines the ATP pocket. Residues 335-357 (LSSSASDDENSEGNVDFETGEVF) are disordered.

It belongs to the RecA family.

Its subcellular location is the cytoplasm. Can catalyze the hydrolysis of ATP in the presence of single-stranded DNA, the ATP-dependent uptake of single-stranded DNA by duplex DNA, and the ATP-dependent hybridization of homologous single-stranded DNAs. It interacts with LexA causing its activation and leading to its autocatalytic cleavage. In Shewanella sp. (strain MR-4), this protein is Protein RecA.